The following is a 467-amino-acid chain: Tel2-interacting protein 2 (467 aa).

Residues 4 to 45 (YKELARRLHTLQSKNEKEALEKQIDFLDKLVVEVDSLVHEQD) are a coiled coil.

The protein belongs to the TTI2 family. Component of the TTT complex composed of tel2, tti1 and tti2. Interacts with tel2 and ttiI1. Component of the ASTRA complex composed of at least rvb1, rvb2, tra1, tel2, tti1 and tti2.

It localises to the nucleus. In terms of biological role, component of the tel2-tti1-tti2 (TTT) complex that stabilizes protein levels of the phosphatidylinositol 3-kinase-related protein kinase (PIKK) family proteins. The TTT complex is involved in the cellular resistance to DNA damage stresses, like ionizing radiation (IR), ultraviolet (UV) and mitomycin C (MMC). Component of the ASTRA complex involved in chromatin remodeling. The chain is Tel2-interacting protein 2 from Schizosaccharomyces pombe (strain 972 / ATCC 24843) (Fission yeast).